The primary structure comprises 1098 residues: MRTSLQAVALWGQKAPPHSITAIMITDDQRMIVTGSQEGQLCLWNLSHELKISAKELLFGHSASVTCLARARDFSKQPYIVSAAENGEMCVWNVTNGQCVEKATLPYRHTAICYYHCSFRMTGEGWLLCCGEYQDVLIIDAKTLAVVHSFRSSQFPDWINCMCIVHSMRIQDSLLVVSVAGELKVWDLSSSINSIQEKQDVYEKESKFLESLNCQTIRFCTYTERLLLVVFSKCWKVYDYCDFSLLLTEVSRNGQFFAGGEVIAAHRILIWTEDGHSYIYQLLNSGLSKSIYPADGRVLKETIYPHLLCSTSVQENKNRPFVMGYMNERKEPFYKVLFSGEVSGRITLWHIPDVPVSKFDGSPREIPVTATWTLQDNFDKHDTVSQSIIDYFSGLKDGAGTAVVTSSEYIPSLDKLICGCEDGTIIITQALNAAKARLLEGGSLVKDSSPHKVLKGHHQSVTSLLYPHGLSSKLDQSWMLSGDLDSCVILWDIFTEEILHKFFLEAGPVTSLLMSPEKFKLRGAQIICCVCSDHSVALLHLEGRSCLLRARKHLFPVKMIKWHPVENFLIVGCADDSVYIWEIETGTLERHETGERARIILNCCDDSQLVKSVFPIASETLKHKSIEQRSSSPYQLGPLPCPGLQVESSCKVIDAKFCPRPFNVLPVKTKWSNVGFHILLFDLENLVELLLPTPLSDVDSSSSFYGGEVLRRAKSTVEKKTLTLRKSKTACGPLSAEALAKPITESPAQGDNTIKFSAENDGIKRQKKMKISKKMQPKPSRKVDASLTIDTAKLFLSCLLPWGVDDLDYLCIKHLNILKLQGPISLGFASNEDNFSLMLPGWDLCNTEMIKDYSGVNLFSRKVLDLSDKYTATLPNQVGIPRGLENNCDSLQESDTIVYLLSRLFLVNKLVNMPLELACRVGSSFRMECVHNKVRSAGNDILNMSSFYSCLRNGKNESHVPEADLSLLKLISCWRDQSVQVTEAIQAVLWAEVQQHMKSLGKIPVNSQPVSMAENGNCEMKQMLPKLEWTEELELQCIRNTLPLQTPVSPVKHDSNLNSANIQDMEDMPDRCVLEESESPGEPRHHSWIAKVCPCKVS.

WD repeat units follow at residues 15 to 54 (APPH…KISA), 60 to 102 (GHSA…CVEK), 158 to 196 (WINC…NSIQ), 315 to 359 (ENKN…VSKF), 399 to 438 (AGTA…KARL), 456 to 501 (GHHQ…ILHK), 504 to 549 (LEAG…CLLR), and 552 to 591 (KHLF…LERH). Phosphoserine occurs at positions 1077 and 1079.

Its subcellular location is the cytoplasmic vesicle. In terms of biological role, plays a major role in formation of tooth enamel. Specifically required during the maturation phase of amelogenesis for normal formation of the enamel matrix and clearance of enamel proteins. May be involved in localization of the calcium transporter SLC24A4 to the ameloblast cell membrane. In Pongo abelii (Sumatran orangutan), this protein is WD repeat-containing protein 72 (WDR72).